Consider the following 58-residue polypeptide: ComX pheromone (58 aa).

Positions Met1–Lys52 are excised as a propeptide. A lipid anchor (3'-geranyl-2',N2-cyclotryptophan; in strain RO-E-2 /NRRL B-23055) is attached at Trp56.

Interacts directly with the sensor histidine kinase ComP and stimulates its activity. Post-translationally, trp-56 is modified by geranylation, which is essential for activity. Modified by the tryptophan prenyltransferase ComQ before export to the extracellular environment. The type of isoprenyl derivative differs among the different pherotypes and depends on ComX primary sequence.

The protein resides in the secreted. Its function is as follows. Part of a major quorum-sensing system that regulates the development of genetic competence. Acts through the activation of the two-component regulatory system ComP/ComA composed of a sensor histidine kinase, ComP, and a response regulator, ComA. This chain is ComX pheromone, found in Bacillus spizizenii (Bacillus subtilis subsp. spizizenii).